A 506-amino-acid polypeptide reads, in one-letter code: 2,3-bisphosphoglycerate-independent phosphoglycerate mutase (506 aa).

Positions 13 and 63 each coordinate Mn(2+). Ser-63 serves as the catalytic Phosphoserine intermediate. Substrate contacts are provided by residues His-124, 153 to 154 (RD), Arg-183, Arg-189, 254 to 257 (RADR), and Lys-330. Residues Asp-396, His-400, Asp-437, His-438, and His-456 each coordinate Mn(2+).

The protein belongs to the BPG-independent phosphoglycerate mutase family. Monomer. The cofactor is Mn(2+).

The enzyme catalyses (2R)-2-phosphoglycerate = (2R)-3-phosphoglycerate. It participates in carbohydrate degradation; glycolysis; pyruvate from D-glyceraldehyde 3-phosphate: step 3/5. Catalyzes the interconversion of 2-phosphoglycerate and 3-phosphoglycerate. This Cereibacter sphaeroides (strain ATCC 17025 / ATH 2.4.3) (Rhodobacter sphaeroides) protein is 2,3-bisphosphoglycerate-independent phosphoglycerate mutase.